Reading from the N-terminus, the 896-residue chain is FHIP family protein C05D11.8 (896 aa).

The interval 823–865 is disordered; that stretch reads STASSPRTSDDHDPTLFYGRSTMAPPGRKPLLREPSRQETLDD. Over residues 853 to 865 the composition is skewed to basic and acidic residues; sequence LLREPSRQETLDD.

It belongs to the FHIP family.

This chain is FHIP family protein C05D11.8, found in Caenorhabditis elegans.